The following is a 502-amino-acid chain: 2,3-bisphosphoglycerate-independent phosphoglycerate mutase (502 aa).

Residues aspartate 13 and serine 63 each contribute to the Mn(2+) site. Serine 63 functions as the Phosphoserine intermediate in the catalytic mechanism. Substrate is bound by residues histidine 117, 146–147 (RD), arginine 177, arginine 183, 251–254 (RSDR), and lysine 324. Mn(2+)-binding residues include aspartate 389, histidine 393, aspartate 430, histidine 431, and histidine 448.

Belongs to the BPG-independent phosphoglycerate mutase family. Monomer. Mn(2+) serves as cofactor.

It catalyses the reaction (2R)-2-phosphoglycerate = (2R)-3-phosphoglycerate. It functions in the pathway carbohydrate degradation; glycolysis; pyruvate from D-glyceraldehyde 3-phosphate: step 3/5. Its function is as follows. Catalyzes the interconversion of 2-phosphoglycerate and 3-phosphoglycerate. The sequence is that of 2,3-bisphosphoglycerate-independent phosphoglycerate mutase from Ureaplasma urealyticum serovar 10 (strain ATCC 33699 / Western).